The primary structure comprises 404 residues: Zinc finger CCCH domain-containing protein 3 (404 aa).

5 consecutive C3H1-type zinc fingers follow at residues 47–75 (RPGE…HPTH), 90–118 (RIGQ…HPKD), 135–163 (RLGE…HPQP), 261–289 (SSDQ…HPGV), and 307–335 (RPGQ…HPML). The segment covering 350 to 374 (FASPVTTHQRISPTPNRSDSKSLSN) has biased composition (polar residues). The interval 350–404 (FASPVTTHQRISPTPNRSDSKSLSNGKPDVKKESSETEKPDNGEVQDLSEDASSP) is disordered. Positions 377-391 (PDVKKESSETEKPDN) are enriched in basic and acidic residues.

The protein resides in the nucleus. Possesses RNA-binding and ribonuclease activities in vitro. This chain is Zinc finger CCCH domain-containing protein 3, found in Arabidopsis thaliana (Mouse-ear cress).